The following is a 157-amino-acid chain: Protein Smg homolog (157 aa).

It belongs to the Smg family.

This Xanthomonas campestris pv. campestris (strain 8004) protein is Protein Smg homolog.